Consider the following 213-residue polypeptide: Phosphatidylserine decarboxylase proenzyme (213 aa).

Ser182 serves as the catalytic Schiff-base intermediate with substrate; via pyruvic acid. The residue at position 182 (Ser182) is a Pyruvic acid (Ser); by autocatalysis.

The protein belongs to the phosphatidylserine decarboxylase family. PSD-A subfamily. Heterodimer of a large membrane-associated beta subunit and a small pyruvoyl-containing alpha subunit. It depends on pyruvate as a cofactor. Is synthesized initially as an inactive proenzyme. Formation of the active enzyme involves a self-maturation process in which the active site pyruvoyl group is generated from an internal serine residue via an autocatalytic post-translational modification. Two non-identical subunits are generated from the proenzyme in this reaction, and the pyruvate is formed at the N-terminus of the alpha chain, which is derived from the carboxyl end of the proenzyme. The post-translation cleavage follows an unusual pathway, termed non-hydrolytic serinolysis, in which the side chain hydroxyl group of the serine supplies its oxygen atom to form the C-terminus of the beta chain, while the remainder of the serine residue undergoes an oxidative deamination to produce ammonia and the pyruvoyl prosthetic group on the alpha chain.

It is found in the cell membrane. The catalysed reaction is a 1,2-diacyl-sn-glycero-3-phospho-L-serine + H(+) = a 1,2-diacyl-sn-glycero-3-phosphoethanolamine + CO2. It participates in phospholipid metabolism; phosphatidylethanolamine biosynthesis; phosphatidylethanolamine from CDP-diacylglycerol: step 2/2. Catalyzes the formation of phosphatidylethanolamine (PtdEtn) from phosphatidylserine (PtdSer). This Geotalea uraniireducens (strain Rf4) (Geobacter uraniireducens) protein is Phosphatidylserine decarboxylase proenzyme.